The following is a 450-amino-acid chain: Protein tweety homolog 1 (450 aa).

At 1 to 43 the chain is on the extracellular side; sequence MGAPPGYRPSAWVHLLHQLPRADFQLRPVPSAFAPQEREYQQA. Residues 44–64 traverse the membrane as a helical segment; the sequence is LLLVAALAGLGLGLSLIFIAV. The Cytoplasmic portion of the chain corresponds to 65-88; that stretch reads YLIRFCCCRPPEPPGAKSPPPGGG. The chain crosses the membrane as a helical span at residues 89–109; it reads CVTWNCIAALLVGCAGIGVGF. At 110 to 214 the chain is on the extracellular side; that stretch reads YGNSETSDGV…DVSFVEEYRW (105 aa). N-linked (GlcNAc...) asparagine glycosylation is present at asparagine 130. A helical membrane pass occupies residues 215–235; sequence LAYVLLLLLELLVCLFTLLGL. Residues 236 to 240 lie on the Cytoplasmic side of the membrane; it reads ARQSK. Residues 241–261 form a helical membrane-spanning segment; that stretch reads WLVIVMTVMSLLVLVLSWGSM. Residues 262–390 are Extracellular-facing; that stretch reads GLEAATAVGL…LRGLCEDTLE (129 aa). Intrachain disulfides connect cysteine 275–cysteine 385 and cysteine 303–cysteine 370. Asparagine 284 and asparagine 355 each carry an N-linked (GlcNAc...) asparagine glycan. Residues 391–411 traverse the membrane as a helical segment; it reads GLLFLLLFSLLSAGALATVLC. Residues 412–450 lie on the Cytoplasmic side of the membrane; sequence SLPRAWALFPPSDDYEDTDDDDPFNPQESKRFVQWQSSI. Residues 427–450 are disordered; sequence EDTDDDDPFNPQESKRFVQWQSSI. Serine 440 carries the post-translational modification Phosphoserine.

Belongs to the tweety family. In terms of assembly, homotetramer; disulfide-linked. Homodimer. Post-translationally, N-glycosylated. Contains high-mannose, hybrid and complex oligosaccharides.

The protein resides in the cell membrane. The catalysed reaction is chloride(in) = chloride(out). The enzyme catalyses L-glutamate(out) = L-glutamate(in). Its function is as follows. Calcium-independent, swelling-dependent volume-regulated anion channel (VRAC-swell) which plays a pivotal role in the process of regulatory volume decrease (RVD) in the brain through the efflux of anions like chloride and organic osmolytes like glutamate. This is Protein tweety homolog 1 (TTYH1) from Bos taurus (Bovine).